The following is a 141-amino-acid chain: Endoribonuclease YbeY (141 aa).

Residues His101, His105, and His111 each coordinate Zn(2+).

This sequence belongs to the endoribonuclease YbeY family. Zn(2+) is required as a cofactor.

Its subcellular location is the cytoplasm. In terms of biological role, single strand-specific metallo-endoribonuclease involved in late-stage 70S ribosome quality control and in maturation of the 3' terminus of the 16S rRNA. The sequence is that of Endoribonuclease YbeY from Nitrosomonas eutropha (strain DSM 101675 / C91 / Nm57).